A 59-amino-acid chain; its full sequence is Large ribosomal subunit protein uL30 (59 aa).

Belongs to the universal ribosomal protein uL30 family. Part of the 50S ribosomal subunit.

This chain is Large ribosomal subunit protein uL30, found in Psychrobacter arcticus (strain DSM 17307 / VKM B-2377 / 273-4).